Consider the following 441-residue polypeptide: Proline--tRNA ligase (441 aa).

Belongs to the class-II aminoacyl-tRNA synthetase family. ProS type 2 subfamily. In terms of assembly, homodimer.

It is found in the cytoplasm. The catalysed reaction is tRNA(Pro) + L-proline + ATP = L-prolyl-tRNA(Pro) + AMP + diphosphate. In terms of biological role, catalyzes the attachment of proline to tRNA(Pro) in a two-step reaction: proline is first activated by ATP to form Pro-AMP and then transferred to the acceptor end of tRNA(Pro). In Methylobacterium radiotolerans (strain ATCC 27329 / DSM 1819 / JCM 2831 / NBRC 15690 / NCIMB 10815 / 0-1), this protein is Proline--tRNA ligase.